The following is a 516-amino-acid chain: Thioredoxin reductase 2, mitochondrial (516 aa).

62-79 (DYVKPTPVGTKWGIGGTC) is an FAD binding site. Cysteines 79 and 84 form a disulfide. Catalysis depends on His489, which acts as the Proton acceptor.

The protein belongs to the class-I pyridine nucleotide-disulfide oxidoreductase family. As to quaternary structure, homodimer. FAD serves as cofactor.

It is found in the mitochondrion. The enzyme catalyses [thioredoxin]-dithiol + NADP(+) = [thioredoxin]-disulfide + NADPH + H(+). Its function is as follows. Thioredoxin system is a major player in glutathione metabolism, due to the demonstrated absence of a glutathione reductase. Functionally interacts with the Sod/Cat reactive oxidation species (ROS) defense system and thereby has a role in preadult development and life span. Lack of a glutathione reductase suggests antioxidant defense in Drosophila, and probably in related insects, differs fundamentally from that in other organisms. This chain is Thioredoxin reductase 2, mitochondrial, found in Drosophila melanogaster (Fruit fly).